The chain runs to 358 residues: DnaJ homolog subfamily B member 11 (358 aa).

Positions 1–22 (MAPQNLSTFCLLLLYLIGAVIA) are cleaved as a signal peptide. The 66-residue stretch at 25–90 (DFYKILGVPR…EKRKQYDTYG (66 aa)) folds into the J domain. The residue at position 188 (Thr-188) is a Phosphothreonine. The N-linked (GlcNAc...) asparagine glycan is linked to Asn-261.

In terms of assembly, part of a large chaperone multiprotein complex comprising DNAJB11, HSP90B1, HSPA5, HYOU, PDIA2, PDIA4, PDIA6, PPIB, SDF2L1, UGGT1 and very small amounts of ERP29, but not, or at very low levels, CALR nor CANX. Binds to denatured substrates in an ATP-independent manner. Interacts via the J domain with HSPA5 in an ATP-dependent manner. Contains high-mannose Endo H-sensitive carbohydrates. Post-translationally, cys-169, Cys-171, Cys-193 and Cys-196 form intramolecular disulfide bonds. The preferential partner for each Cys is not known. In terms of processing, thr-188 was reported to be phosphorylated upon DNA damage by ATM or ATR; however as this position has been shown to be in the ER lumen, the in vivo relevance is not proven. Widely expressed.

It is found in the endoplasmic reticulum lumen. As a co-chaperone for HSPA5 it is required for proper folding, trafficking or degradation of proteins. Binds directly to both unfolded proteins that are substrates for ERAD and nascent unfolded peptide chains, but dissociates from the HSPA5-unfolded protein complex before folding is completed. May help recruiting HSPA5 and other chaperones to the substrate. Stimulates HSPA5 ATPase activity. It is necessary for maturation and correct trafficking of PKD1. In Homo sapiens (Human), this protein is DnaJ homolog subfamily B member 11 (DNAJB11).